Consider the following 157-residue polypeptide: Ribosomal RNA large subunit methyltransferase H (157 aa).

Residues Gly-106 and 125–130 (LSEMTF) contribute to the S-adenosyl-L-methionine site.

The protein belongs to the RNA methyltransferase RlmH family. In terms of assembly, homodimer.

The protein resides in the cytoplasm. It carries out the reaction pseudouridine(1915) in 23S rRNA + S-adenosyl-L-methionine = N(3)-methylpseudouridine(1915) in 23S rRNA + S-adenosyl-L-homocysteine + H(+). Functionally, specifically methylates the pseudouridine at position 1915 (m3Psi1915) in 23S rRNA. This Syntrophobacter fumaroxidans (strain DSM 10017 / MPOB) protein is Ribosomal RNA large subunit methyltransferase H.